Here is a 323-residue protein sequence, read N- to C-terminus: MIDFGNFYSLIAKNHLSHWLETLPAQIANWQREQQHGLFKQWSNAVEFLPEIKPYRLDLLHSVTAESEEPLSAGQIKRIETLMRNLMPWRKGPFSLYGVNIDTEWRSDWKWDRVLPHLSDLTGRTILDVGCGSGYHMWRMIGAGAHLAVGIDPTQLFLCQFEAVRKLLGNDQRAHLLPLGIEQLPALKAFDTVFSMGVLYHRRSPLEHLWQLKDQLVNEGELVLETLVIDGDENTVLVPGDRYAQMRNVYFIPSALALKNWLKKCGFVDIRIADVSVTTTEEQRRTEWMVTESLSDFLDPHDPSKTVEGYPAPKRAVLIARKP.

Carboxy-S-adenosyl-L-methionine contacts are provided by residues Lys-91, Trp-105, Lys-110, Gly-130, 152-154, 181-182, Met-196, Tyr-200, and Arg-315; these read DPT and IE.

It belongs to the class I-like SAM-binding methyltransferase superfamily. CmoB family. As to quaternary structure, homotetramer.

The catalysed reaction is carboxy-S-adenosyl-L-methionine + 5-hydroxyuridine(34) in tRNA = 5-carboxymethoxyuridine(34) in tRNA + S-adenosyl-L-homocysteine + H(+). Catalyzes carboxymethyl transfer from carboxy-S-adenosyl-L-methionine (Cx-SAM) to 5-hydroxyuridine (ho5U) to form 5-carboxymethoxyuridine (cmo5U) at position 34 in tRNAs. This chain is tRNA U34 carboxymethyltransferase, found in Escherichia coli O157:H7.